The following is a 574-amino-acid chain: Squalene monooxygenase (574 aa).

Topologically, residues 1–20 (MWTFLGIATFTYFYKKFGDF) are cytoplasmic. The interaction with MARCHF6 stretch occupies residues 1 to 100 (MWTFLGIATF…EQLEARRRRK (100 aa)). Residues 21-41 (ITLANREVLLCVLVFLSLGLV) lie within the membrane without spanning it. The Cytoplasmic portion of the chain corresponds to 42–574 (LSYRCRHRNG…IYSEMKYMVH (533 aa)). The interval 62-73 (QFALFSDILSGL) is required for degradation in response to high membrane cholesterol levels. Residues 118–574 (TSSQNDPEVI…IYSEMKYMVH (457 aa)) are sufficient for enzyme activity. FAD is bound by residues 133 to 134 (VL), 153 to 154 (ER), R161, F166, R234, V250, D408, and M421. The interval 516-574 (PLVLIGHFFAVAIYAVYFCFKSEPWITKPRALLSSGAVLYKACSVIFPLIYSEMKYMVH) is hydrophobic; mediates interaction with membranes.

It belongs to the squalene monooxygenase family. As to quaternary structure, interacts (via N-terminal domain) with MARCHF6. Interacts with SMIM22; this interaction modulates lipid droplet formation. Requires FAD as cofactor. Post-translationally, ubiquitinated by MARCHF6 in response to high cholesterol levels in intracellular membranes, leading to proteasomal degradation. As to expression, detected in liver (at protein level).

It is found in the microsome membrane. It localises to the endoplasmic reticulum membrane. The enzyme catalyses squalene + reduced [NADPH--hemoprotein reductase] + O2 = (S)-2,3-epoxysqualene + oxidized [NADPH--hemoprotein reductase] + H2O + H(+). It functions in the pathway terpene metabolism; lanosterol biosynthesis; lanosterol from farnesyl diphosphate: step 2/3. With respect to regulation, inhibited by NB-598 ((E)N-ethyl-N-(6,6-dimethyl-2-hepten-4-ynyl)-3-[(3,3'-bi-thiophen-5-yl)methoxy]benzene-methanamine). Contrary to fungal enzymes, the mammalian enzyme is only slightly inhibited by terbinafine. Inhibited by tellurite, tellurium dioxide, selenite, and selenium dioxide. In terms of biological role, catalyzes the stereospecific oxidation of squalene to (S)-2,3-epoxysqualene, and is considered to be a rate-limiting enzyme in steroid biosynthesis. In Homo sapiens (Human), this protein is Squalene monooxygenase (SQLE).